The primary structure comprises 119 residues: Holo-[acyl-carrier-protein] synthase (119 aa).

Positions 8 and 60 each coordinate Mg(2+).

It belongs to the P-Pant transferase superfamily. AcpS family. The cofactor is Mg(2+).

It localises to the cytoplasm. It catalyses the reaction apo-[ACP] + CoA = holo-[ACP] + adenosine 3',5'-bisphosphate + H(+). Functionally, transfers the 4'-phosphopantetheine moiety from coenzyme A to a Ser of acyl-carrier-protein. In Mycoplasma pneumoniae (strain ATCC 29342 / M129 / Subtype 1) (Mycoplasmoides pneumoniae), this protein is Holo-[acyl-carrier-protein] synthase.